Consider the following 358-residue polypeptide: UDP-N-acetylglucosamine--N-acetylmuramyl-(pentapeptide) pyrophosphoryl-undecaprenol N-acetylglucosamine transferase (358 aa).

UDP-N-acetyl-alpha-D-glucosamine-binding positions include 11-13 (TGG), Asn124, Arg164, Ser195, and Gln291.

Belongs to the glycosyltransferase 28 family. MurG subfamily.

It is found in the cell inner membrane. The catalysed reaction is di-trans,octa-cis-undecaprenyl diphospho-N-acetyl-alpha-D-muramoyl-L-alanyl-D-glutamyl-meso-2,6-diaminopimeloyl-D-alanyl-D-alanine + UDP-N-acetyl-alpha-D-glucosamine = di-trans,octa-cis-undecaprenyl diphospho-[N-acetyl-alpha-D-glucosaminyl-(1-&gt;4)]-N-acetyl-alpha-D-muramoyl-L-alanyl-D-glutamyl-meso-2,6-diaminopimeloyl-D-alanyl-D-alanine + UDP + H(+). It participates in cell wall biogenesis; peptidoglycan biosynthesis. In terms of biological role, cell wall formation. Catalyzes the transfer of a GlcNAc subunit on undecaprenyl-pyrophosphoryl-MurNAc-pentapeptide (lipid intermediate I) to form undecaprenyl-pyrophosphoryl-MurNAc-(pentapeptide)GlcNAc (lipid intermediate II). This Leptospira interrogans serogroup Icterohaemorrhagiae serovar copenhageni (strain Fiocruz L1-130) protein is UDP-N-acetylglucosamine--N-acetylmuramyl-(pentapeptide) pyrophosphoryl-undecaprenol N-acetylglucosamine transferase.